The primary structure comprises 259 residues: uncharacterized protein (259 aa).

The region spanning 110 to 259 (QMGHPLTAWG…VHTVFHYFLT (150 aa)) is the N-acetyltransferase domain.

Functionally, may be involved in maturation of the outermost layer of the spore. This is an uncharacterized protein from Bacillus subtilis (strain 168).